A 243-amino-acid chain; its full sequence is Small ribosomal subunit protein uS5 (243 aa).

The tract at residues M1–E54 is disordered. Polar residues predominate over residues A11–S24. Residues N26–E54 show a composition bias toward basic and acidic residues. Positions M57–V120 constitute an S5 DRBM domain.

It belongs to the universal ribosomal protein uS5 family. In terms of assembly, part of the 30S ribosomal subunit. Contacts proteins S4 and S8.

Its function is as follows. With S4 and S12 plays an important role in translational accuracy. Functionally, located at the back of the 30S subunit body where it stabilizes the conformation of the head with respect to the body. The sequence is that of Small ribosomal subunit protein uS5 from Bifidobacterium animalis subsp. lactis (strain AD011).